The primary structure comprises 132 residues: UPF0719 inner membrane protein YjfL (132 aa).

Residues 1–6 (MHILDS) lie on the Periplasmic side of the membrane. The chain crosses the membrane as a helical span at residues 7–27 (LLAFSAYFFIGVAMVIIFLFI). Residues 28 to 46 (YSKITPHNEWQLIKNNNTA) lie on the Cytoplasmic side of the membrane. A helical transmembrane segment spans residues 47-67 (ASLAFSGTLLGYVIPLSSAAI). The Periplasmic portion of the chain corresponds to 68 to 71 (NAVS). Residues 72-92 (IPDYFAWGGIALVIQLLVFAG) traverse the membrane as a helical segment. Over 93 to 109 (VRLYMPALSEKIINHNT) the chain is Cytoplasmic. A helical transmembrane segment spans residues 110–130 (AAGMFMGTAALAGGIFNAACM). The Periplasmic portion of the chain corresponds to 131–132 (TW).

This sequence belongs to the UPF0719 family.

It localises to the cell inner membrane. The polypeptide is UPF0719 inner membrane protein YjfL (yjfL) (Escherichia coli O157:H7).